The following is a 178-amino-acid chain: Female-specific protein transformer (178 aa).

Basic and acidic residues-rich tracts occupy residues 1-18 and 25-40; these read MKMD…DSHG and RERE…DSKK. The tract at residues 1 to 117 is disordered; it reads MKMDADSSCG…RRYNPPPKII (117 aa). Composition is skewed to basic residues over residues 59-73 and 81-108; these read RRLR…RRSA and RRHR…RSPR.

The protein localises to the nucleus speckle. Its function is as follows. Member of the regulatory pathway controlling female somatic sexual differentiation, regulated by Sxl. Activates dsx female-specific splicing by promoting the formation of a splicing enhancer complex which consists of tra, tra2 and sr proteins. The polypeptide is Female-specific protein transformer (tra) (Drosophila erecta (Fruit fly)).